Here is a 413-residue protein sequence, read N- to C-terminus: Gamma-glutamyl phosphate reductase (413 aa).

Belongs to the gamma-glutamyl phosphate reductase family.

It is found in the cytoplasm. It carries out the reaction L-glutamate 5-semialdehyde + phosphate + NADP(+) = L-glutamyl 5-phosphate + NADPH + H(+). Its pathway is amino-acid biosynthesis; L-proline biosynthesis; L-glutamate 5-semialdehyde from L-glutamate: step 2/2. Its function is as follows. Catalyzes the NADPH-dependent reduction of L-glutamate 5-phosphate into L-glutamate 5-semialdehyde and phosphate. The product spontaneously undergoes cyclization to form 1-pyrroline-5-carboxylate. The protein is Gamma-glutamyl phosphate reductase of Caulobacter vibrioides (strain ATCC 19089 / CIP 103742 / CB 15) (Caulobacter crescentus).